The primary structure comprises 663 residues: Transketolase 2 (663 aa).

A substrate-binding site is contributed by histidine 25. Thiamine diphosphate is bound by residues histidine 65 and 113–115 (GPL). Position 154 (aspartate 154) interacts with Mg(2+). Glycine 155 and asparagine 184 together coordinate thiamine diphosphate. Residues asparagine 184 and isoleucine 186 each coordinate Mg(2+). Histidine 259, arginine 356, and serine 383 together coordinate substrate. A thiamine diphosphate-binding site is contributed by histidine 259. Glutamate 410 (proton donor) is an active-site residue. Phenylalanine 436 provides a ligand contact to thiamine diphosphate. The substrate site is built by histidine 460, aspartate 468, and arginine 519.

Belongs to the transketolase family. In terms of assembly, homodimer. Mg(2+) is required as a cofactor. Ca(2+) serves as cofactor. Requires Mn(2+) as cofactor. The cofactor is Co(2+). It depends on thiamine diphosphate as a cofactor.

The enzyme catalyses D-sedoheptulose 7-phosphate + D-glyceraldehyde 3-phosphate = aldehydo-D-ribose 5-phosphate + D-xylulose 5-phosphate. Its function is as follows. Catalyzes the transfer of a two-carbon ketol group from a ketose donor to an aldose acceptor, via a covalent intermediate with the cofactor thiamine pyrophosphate. In Vibrio parahaemolyticus serotype O3:K6 (strain RIMD 2210633), this protein is Transketolase 2 (tkt2).